Consider the following 319-residue polypeptide: N-acetyl-D-glucosamine kinase (319 aa).

Thr-14 serves as a coordination point for ATP. Asn-37 and Asp-113 together coordinate substrate. Residue Thr-135 coordinates ATP. Substrate is bound by residues 153–155 (GWG) and Asp-160. Position 220 (Ala-220) interacts with ATP.

It belongs to the eukaryotic-type N-acetylglucosamine kinase family. In terms of assembly, homodimer.

The catalysed reaction is N-acetyl-D-glucosamine + ATP = N-acetyl-D-glucosamine 6-phosphate + ADP + H(+). Converts N-acetylglucosamine (GlcNAc), a major component of complex carbohydrates, into GlcNAc 6-phosphate. Also has ManNAc kinase activity. The protein is N-acetyl-D-glucosamine kinase (nagk) of Dictyostelium discoideum (Social amoeba).